Here is a 111-residue protein sequence, read N- to C-terminus: Large ribosomal subunit protein uL22 (111 aa).

This sequence belongs to the universal ribosomal protein uL22 family. Part of the 50S ribosomal subunit.

This protein binds specifically to 23S rRNA; its binding is stimulated by other ribosomal proteins, e.g. L4, L17, and L20. It is important during the early stages of 50S assembly. It makes multiple contacts with different domains of the 23S rRNA in the assembled 50S subunit and ribosome. Its function is as follows. The globular domain of the protein is located near the polypeptide exit tunnel on the outside of the subunit, while an extended beta-hairpin is found that lines the wall of the exit tunnel in the center of the 70S ribosome. The chain is Large ribosomal subunit protein uL22 from Pelobacter propionicus (strain DSM 2379 / NBRC 103807 / OttBd1).